Consider the following 370-residue polypeptide: tRNA-specific 2-thiouridylase MnmA (370 aa).

Residues 19-26 (AMSGGVDS) and Leu45 each bind ATP. Catalysis depends on Cys113, which acts as the Nucleophile. A disulfide bond links Cys113 and Cys209. Residue Gly137 participates in ATP binding. The segment at 159–161 (KDQ) is interaction with tRNA. Cys209 serves as the catalytic Cysteine persulfide intermediate.

Belongs to the MnmA/TRMU family.

The protein localises to the cytoplasm. It catalyses the reaction S-sulfanyl-L-cysteinyl-[protein] + uridine(34) in tRNA + AH2 + ATP = 2-thiouridine(34) in tRNA + L-cysteinyl-[protein] + A + AMP + diphosphate + H(+). Catalyzes the 2-thiolation of uridine at the wobble position (U34) of tRNA, leading to the formation of s(2)U34. The polypeptide is tRNA-specific 2-thiouridylase MnmA (Rickettsia conorii (strain ATCC VR-613 / Malish 7)).